Reading from the N-terminus, the 251-residue chain is Cathelicidin-B1 (251 aa).

The N-terminal stretch at 1–20 (MGRMWASEVLLLLLLGSSRA) is a signal peptide. Positions 21 to 211 (VTPGLDVSTA…ELRCRPLRPQ (191 aa)) are excised as a propeptide. Residues 29–109 (TAPGLDGSIP…TITPKQDGSI (81 aa)) are disordered. 2 cysteine pairs are disulfide-bonded: Cys172–Cys181 and Cys189–Cys205.

This sequence belongs to the cathelicidin family. In terms of tissue distribution, detected in bursa of Fabricius, in filamentous structures surrounding the basal and lateral surfaces of bursal M cells (at protein level). Detected in bursa of Fabricius, in secretory enterocytes of the interfollicular bursal epithelium, but not in M cells.

Its subcellular location is the secreted. Functionally, has potent antimicrobial activity against Gram-positive and Gram-negative bacteria (in vitro). May play a role in the innate immune response. The protein is Cathelicidin-B1 (CATHB1) of Gallus gallus (Chicken).